Here is a 610-residue protein sequence, read N- to C-terminus: Calcium-dependent protein kinase 1 (610 aa).

Gly-2 carries N-myristoyl glycine lipidation. Cys-5 is lipidated: S-palmitoyl cysteine. A disordered region spans residues 17-133; sequence VSAAMWRPRD…HMKRVSSAGL (117 aa). Composition is skewed to basic and acidic residues over residues 47–56 and 70–117; these read LRSRLSDEVQ and TDVE…DPPA. Residues 118–127 are compositionally biased toward basic residues; the sequence is KPKKPKHMKR. The Protein kinase domain occupies 150 to 408; that stretch reads YSLGRKLGQG…AHQVLCHPWV (259 aa). ATP is bound by residues 156–164 and Lys-179; that span reads LGQGQFGTT. Asp-274 (proton acceptor) is an active-site residue. Ser-314 carries the post-translational modification Phosphoserine. Residues 414-444 are autoinhibitory domain; sequence APDKPLDSAVLSRMKQFSAMNKFKKMALRVI. 4 consecutive EF-hand domains span residues 451–486, 487–522, 523–558, and 559–592; these read EEIAGLKEMFNMIDADKSGQITFEELKAGLKRVGAN, LKESEILDLMQAADVDNSGTIDYKEFIAATLHLNKI, EREDHLFAAFTYFDKDGSGYITPDELQQACEEFGVE, and DVRIEELMRDVDQDNDGRIDYNEFVAMMQKGSIT. Residues Asp-464, Asp-466, Ser-468, Gln-470, Glu-475, Asp-500, Asp-502, Ser-504, Thr-506, Glu-511, Asp-536, Asp-538, Ser-540, Tyr-542, Glu-547, Asp-570, Asp-572, Asp-574, Arg-576, and Glu-581 each coordinate Ca(2+).

The protein belongs to the protein kinase superfamily. Ser/Thr protein kinase family. CDPK subfamily. In terms of assembly, interacts with 14-3-3 proteins.

It localises to the peroxisome membrane. It catalyses the reaction L-seryl-[protein] + ATP = O-phospho-L-seryl-[protein] + ADP + H(+). It carries out the reaction L-threonyl-[protein] + ATP = O-phospho-L-threonyl-[protein] + ADP + H(+). Activated by calcium. Autophosphorylation may play an important role in the regulation of the kinase activity. In terms of biological role, may play a role in signal transduction pathways that involve calcium as a second messenger. Phosphorylates the Ca(2+)-ATPase ACA2 resulting in the inhibition of its calcium activation. The protein is Calcium-dependent protein kinase 1 (CPK1) of Arabidopsis thaliana (Mouse-ear cress).